Consider the following 189-residue polypeptide: UPF0312 protein VIBHAR_05924 (189 aa).

A signal peptide spans 1 to 22; sequence MKKSLFATGLAIAIALPFGANA.

Belongs to the UPF0312 family. Type 1 subfamily.

The protein localises to the periplasm. The protein is UPF0312 protein VIBHAR_05924 of Vibrio campbellii (strain ATCC BAA-1116).